A 203-amino-acid polypeptide reads, in one-letter code: Outer-membrane lipoprotein carrier protein (203 aa).

The signal sequence occupies residues 1-21 (MKKIAITCALLSSLVASSVWA).

The protein belongs to the LolA family. In terms of assembly, monomer.

It localises to the periplasm. Participates in the translocation of lipoproteins from the inner membrane to the outer membrane. Only forms a complex with a lipoprotein if the residue after the N-terminal Cys is not an aspartate (The Asp acts as a targeting signal to indicate that the lipoprotein should stay in the inner membrane). In Escherichia coli O139:H28 (strain E24377A / ETEC), this protein is Outer-membrane lipoprotein carrier protein.